The primary structure comprises 266 residues: Manganese catalase (266 aa).

Residue glutamate 35 participates in Mn(2+) binding. Positions 57 and 61 each coordinate Ca(2+). Residues glutamate 66, histidine 69, glutamate 148, and histidine 181 each contribute to the Mn(2+) site. Residues asparagine 218, serine 220, and glycine 222 each coordinate Ca(2+). The segment at 243–266 is disordered; sequence ENPEAMGGIPHIKPGDPRLHNHQG. Residues 255–266 are compositionally biased toward basic and acidic residues; it reads KPGDPRLHNHQG.

Belongs to the manganese catalase family. In terms of assembly, homohexamer. Ca(2+) is required as a cofactor. It depends on Mn(2+) as a cofactor.

The enzyme catalyses 2 H2O2 = O2 + 2 H2O. Its function is as follows. Catalyzes the decomposition of hydrogen peroxide into water and oxygen. This is Manganese catalase from Lactiplantibacillus plantarum (Lactobacillus plantarum).